The sequence spans 299 residues: Recombination-associated protein RdgC (299 aa).

The protein belongs to the RdgC family.

The protein resides in the cytoplasm. Its subcellular location is the nucleoid. In terms of biological role, may be involved in recombination. The sequence is that of Recombination-associated protein RdgC from Bordetella bronchiseptica (strain ATCC BAA-588 / NCTC 13252 / RB50) (Alcaligenes bronchisepticus).